We begin with the raw amino-acid sequence, 262 residues long: Proteasome subunit alpha (262 aa).

A disordered region spans residues 235–262 (LLPTTGESDAGDSGADGSPSGDSPDTSA).

Belongs to the peptidase T1A family. In terms of assembly, the 20S proteasome core is composed of 14 alpha and 14 beta subunits that assemble into four stacked heptameric rings, resulting in a barrel-shaped structure. The two inner rings, each composed of seven catalytic beta subunits, are sandwiched by two outer rings, each composed of seven alpha subunits. The catalytic chamber with the active sites is on the inside of the barrel. Has a gated structure, the ends of the cylinder being occluded by the N-termini of the alpha-subunits. Is capped by the proteasome-associated ATPase, ARC.

It is found in the cytoplasm. The protein operates within protein degradation; proteasomal Pup-dependent pathway. The formation of the proteasomal ATPase ARC-20S proteasome complex, likely via the docking of the C-termini of ARC into the intersubunit pockets in the alpha-rings, may trigger opening of the gate for substrate entry. Interconversion between the open-gate and close-gate conformations leads to a dynamic regulation of the 20S proteasome proteolysis activity. Its function is as follows. Component of the proteasome core, a large protease complex with broad specificity involved in protein degradation. The protein is Proteasome subunit alpha of Gordonia bronchialis (strain ATCC 25592 / DSM 43247 / BCRC 13721 / JCM 3198 / KCTC 3076 / NBRC 16047 / NCTC 10667) (Rhodococcus bronchialis).